We begin with the raw amino-acid sequence, 146 residues long: Hut operon positive regulatory protein (146 aa).

The protein belongs to the HutP family. In terms of assembly, homohexamer.

Functionally, antiterminator that binds to cis-acting regulatory sequences on the mRNA in the presence of histidine, thereby suppressing transcription termination and activating the hut operon for histidine utilization. The polypeptide is Hut operon positive regulatory protein (Bacillus cereus (strain G9842)).